A 138-amino-acid chain; its full sequence is MTKPIPRIGSRRNGRIGSRKNARRIPKGVIHVQASFNNTIVTVSDVRGQVISWASAGTSGFKGTRRGTPYAAQAAAVNAIRTIIDQDMQRAEVMIKGAGFGRDAALRAIRRSGILLSFVRDVTPMPHNGCRPPQKRRV.

A disordered region spans residues 1 to 22; it reads MTKPIPRIGSRRNGRIGSRKNA. Over residues 9–22 the composition is skewed to basic residues; sequence GSRRNGRIGSRKNA.

The protein belongs to the universal ribosomal protein uS11 family. As to quaternary structure, part of the 30S ribosomal subunit.

The protein localises to the plastid. Its subcellular location is the chloroplast. The protein is Small ribosomal subunit protein uS11c of Dioscorea elephantipes (Elephant's foot yam).